An 89-amino-acid polypeptide reads, in one-letter code: Small ribosomal subunit protein uS15 (89 aa).

Belongs to the universal ribosomal protein uS15 family. In terms of assembly, part of the 30S ribosomal subunit. Forms a bridge to the 50S subunit in the 70S ribosome, contacting the 23S rRNA.

Functionally, one of the primary rRNA binding proteins, it binds directly to 16S rRNA where it helps nucleate assembly of the platform of the 30S subunit by binding and bridging several RNA helices of the 16S rRNA. In terms of biological role, forms an intersubunit bridge (bridge B4) with the 23S rRNA of the 50S subunit in the ribosome. The polypeptide is Small ribosomal subunit protein uS15 (Hamiltonella defensa subsp. Acyrthosiphon pisum (strain 5AT)).